A 157-amino-acid polypeptide reads, in one-letter code: Cyclic pyranopterin monophosphate synthase (157 aa).

Residues 74-76 (MCH) and 112-113 (ME) each bind substrate. Residue aspartate 127 is part of the active site.

It belongs to the MoaC family. As to quaternary structure, homohexamer; trimer of dimers.

It catalyses the reaction (8S)-3',8-cyclo-7,8-dihydroguanosine 5'-triphosphate = cyclic pyranopterin phosphate + diphosphate. The protein operates within cofactor biosynthesis; molybdopterin biosynthesis. Functionally, catalyzes the conversion of (8S)-3',8-cyclo-7,8-dihydroguanosine 5'-triphosphate to cyclic pyranopterin monophosphate (cPMP). The polypeptide is Cyclic pyranopterin monophosphate synthase (Sulfurovum sp. (strain NBC37-1)).